The chain runs to 484 residues: Putative amidase AmiA2 (484 aa).

Active-site charge relay system residues include Lys93 and Ser167. Ser191 acts as the Acyl-ester intermediate in catalysis.

This sequence belongs to the amidase family.

The enzyme catalyses a monocarboxylic acid amide + H2O = a monocarboxylate + NH4(+). The chain is Putative amidase AmiA2 (amiA2) from Mycobacterium bovis (strain ATCC BAA-935 / AF2122/97).